The sequence spans 147 residues: Large ribosomal subunit protein bL9 (147 aa).

Belongs to the bacterial ribosomal protein bL9 family.

Its function is as follows. Binds to the 23S rRNA. The sequence is that of Large ribosomal subunit protein bL9 from Geotalea uraniireducens (strain Rf4) (Geobacter uraniireducens).